Here is a 290-residue protein sequence, read N- to C-terminus: Ribosomal RNA small subunit methyltransferase A (290 aa).

S-adenosyl-L-methionine is bound by residues Asn-27, Leu-29, Gly-54, Glu-75, Asp-100, and Asn-125.

This sequence belongs to the class I-like SAM-binding methyltransferase superfamily. rRNA adenine N(6)-methyltransferase family. RsmA subfamily.

It is found in the cytoplasm. It catalyses the reaction adenosine(1518)/adenosine(1519) in 16S rRNA + 4 S-adenosyl-L-methionine = N(6)-dimethyladenosine(1518)/N(6)-dimethyladenosine(1519) in 16S rRNA + 4 S-adenosyl-L-homocysteine + 4 H(+). Its function is as follows. Specifically dimethylates two adjacent adenosines (A1518 and A1519) in the loop of a conserved hairpin near the 3'-end of 16S rRNA in the 30S particle. May play a critical role in biogenesis of 30S subunits. The sequence is that of Ribosomal RNA small subunit methyltransferase A from Streptococcus pyogenes serotype M5 (strain Manfredo).